The primary structure comprises 583 residues: Membrane protein insertase YidC (583 aa).

The next 6 membrane-spanning stretches (helical) occupy residues 5 to 25 (SVTG…FMSP), 341 to 361 (PFAE…VSNY), 362 to 382 (GLII…LSMA), 427 to 447 (IGGC…FYVF), 473 to 493 (FGFA…LMAV), and 520 to 540 (AMML…YLMF).

Belongs to the OXA1/ALB3/YidC family. Type 1 subfamily. In terms of assembly, interacts with the Sec translocase complex via SecD. Specifically interacts with transmembrane segments of nascent integral membrane proteins during membrane integration.

Its subcellular location is the cell inner membrane. Its function is as follows. Required for the insertion and/or proper folding and/or complex formation of integral membrane proteins into the membrane. Involved in integration of membrane proteins that insert both dependently and independently of the Sec translocase complex, as well as at least some lipoproteins. Aids folding of multispanning membrane proteins. This is Membrane protein insertase YidC from Pelodictyon phaeoclathratiforme (strain DSM 5477 / BU-1).